The following is a 358-amino-acid chain: tRNA N6-adenosine threonylcarbamoyltransferase (358 aa).

2 residues coordinate Fe cation: His111 and His115. Residues Leu146–Gly150, Asp179, Gly192, and Asn294 each bind substrate. A Fe cation-binding site is contributed by Asp322.

It belongs to the KAE1 / TsaD family. The cofactor is Fe(2+).

Its subcellular location is the cytoplasm. The catalysed reaction is L-threonylcarbamoyladenylate + adenosine(37) in tRNA = N(6)-L-threonylcarbamoyladenosine(37) in tRNA + AMP + H(+). Required for the formation of a threonylcarbamoyl group on adenosine at position 37 (t(6)A37) in tRNAs that read codons beginning with adenine. Is involved in the transfer of the threonylcarbamoyl moiety of threonylcarbamoyl-AMP (TC-AMP) to the N6 group of A37, together with TsaE and TsaB. TsaD likely plays a direct catalytic role in this reaction. The protein is tRNA N6-adenosine threonylcarbamoyltransferase of Helicobacter hepaticus (strain ATCC 51449 / 3B1).